The sequence spans 814 residues: MAKTNSYKKVIAGTMTAAMVAGVVSPVAAAGKTFPDVPADHWGIDSINYLVEKGAVKGNDKGMFEPGKELTRAEAATMMAQILNLPIDKDAKPSFADSQGQWYTPFIAAVEKAGVIKGTGNGFEPNGKIDRVSMASLLVEAYKLDTKVNGTPATKFKDLETLNWGKEKANILVELGISVGTGDQWEPKKTVTKAEAAQFIAKTDKQFGTEAAKVESAKAVTTQKVEVKFSKAVEKLTKEDIKVTNKANNDKVLVKEVTLSEDKKSATVELYSNLAAKQTYTVDVNKVGKTEVAVGSLEAKTIEMADQTVVADEPTALQFTVKDENGTEVVSPEGIEFVTPAAEKINAKGEITLAKGTSTTVKAVYKKDGKVVAESKEVKVSAEGAAVASISNWTVAEQNKADFTSKDFKQNNKVYEGDNAYVQVELKDQFNAVTTGKVEYESLNTEVAVVDKATGKVTVLSAGKAPVKVTVKDSKGKELVSKTVEIEAFAQKAMKEIKLEKTNVALSTKDVTDLKVKAPVLDQYGKEFTAPVTVKVLDKDGKELKEQKLEAKYVNKELVLNAAGQEAGNYTVVLTAKSGEKEAKATLALELKAPGAFSKFEVRGLEKELDKYVTEENQKNAMTVSVLPVDANGLVLKGAEAAELKVTTTNKEGKEVDATDAQVTVQNNSVITVGQGAKAGETYKVTVVLDGKLITTHSFKVVDTAPTAKGLAVEFTSTSLKEVAPNADLKAALLNILSVDGVPATTAKATVSNVEFVSADTNVVAENGTVGAKGATSIYVKNLTVVKDGKEQKVEFDKAVQVAVSIKEAKPATK.

The first 29 residues, 1 to 29, serve as a signal peptide directing secretion; the sequence is MAKTNSYKKVIAGTMTAAMVAGVVSPVAA. 3 SLH domains span residues 30–93, 94–150, and 152–214; these read AGKT…DAKP, SFAD…KVNG, and PATK…AAKV. The region spanning 403 to 479 is the BIG2 domain; the sequence is FTSKDFKQNN…TVKDSKGKEL (77 aa).

Post-translationally, probably glycosylated.

It localises to the secreted. It is found in the cell wall. The protein resides in the S-layer. In terms of biological role, the S-layer is a paracrystalline mono-layered assembly of proteins which coat the surface of bacteria. In Bacillus anthracis, this protein is S-layer protein sap (sap).